The following is a 74-amino-acid chain: Heat shock factor-binding protein 1-like protein 1 (74 aa).

The stretch at 12-65 (RALRDAAENLFQELQEHFQALTATLNLRMEEMGNRIEDLQKNVKDLMVQAGIEN) forms a coiled coil.

This sequence belongs to the HSBP1 family.

The polypeptide is Heat shock factor-binding protein 1-like protein 1 (HSBP1L1) (Homo sapiens (Human)).